Here is a 391-residue protein sequence, read N- to C-terminus: Glycerol-3-phosphate dehydrogenase [NAD(+)] 1 (391 aa).

NAD(+)-binding positions include glycine 41–glycine 46, phenylalanine 129, lysine 152, and alanine 185. Lysine 152 provides a ligand contact to substrate. The active-site Proton acceptor is lysine 245. NAD(+) is bound by residues arginine 310 and glutamine 339. Arginine 310–asparagine 311 is a binding site for substrate.

This sequence belongs to the NAD-dependent glycerol-3-phosphate dehydrogenase family.

The protein resides in the cytoplasm. The catalysed reaction is sn-glycerol 3-phosphate + NAD(+) = dihydroxyacetone phosphate + NADH + H(+). This Saccharomyces uvarum (Yeast) protein is Glycerol-3-phosphate dehydrogenase [NAD(+)] 1 (GPD1).